The following is a 122-amino-acid chain: Histone H2B 1 (122 aa).

Residues 1–30 (MPPKPSAKGAKKAAKTVTKPKDGKKRRHAR) are disordered. Residue Ser109 is glycosylated (O-linked (GlcNAc) serine). A Glycyl lysine isopeptide (Lys-Gly) (interchain with G-Cter in ubiquitin) cross-link involves residue Lys117.

This sequence belongs to the histone H2B family. In terms of assembly, the nucleosome is a histone octamer containing two molecules each of H2A, H2B, H3 and H4 assembled in one H3-H4 heterotetramer and two H2A-H2B heterodimers. The octamer wraps approximately 147 bp of DNA. Post-translationally, monoubiquitination of Lys-117 gives a specific tag for epigenetic transcriptional activation and is also prerequisite for histone H3 'Lys-4' and 'Lys-79' methylation. In terms of processing, glcNAcylation at Ser-109 promotes monoubiquitination of Lys-117. It fluctuates in response to extracellular glucose, and associates with transcribed genes.

The protein localises to the nucleus. Its subcellular location is the chromosome. In terms of biological role, core component of nucleosome. Nucleosomes wrap and compact DNA into chromatin, limiting DNA accessibility to the cellular machineries which require DNA as a template. Histones thereby play a central role in transcription regulation, DNA repair, DNA replication and chromosomal stability. DNA accessibility is regulated via a complex set of post-translational modifications of histones, also called histone code, and nucleosome remodeling. This Caenorhabditis elegans protein is Histone H2B 1 (his-11).